Reading from the N-terminus, the 172-residue chain is Large ribosomal subunit protein bL17 (172 aa).

The interval 127-172 (KAAKQDRAKRVKGSKKVTGDVAPAVAPVPSAPAETQEEAKAPESAE) is disordered. Residues 147–159 (VAPAVAPVPSAPA) show a composition bias toward low complexity. The span at 163–172 (EEAKAPESAE) shows a compositional bias: basic and acidic residues.

It belongs to the bacterial ribosomal protein bL17 family. As to quaternary structure, part of the 50S ribosomal subunit. Contacts protein L32.

The chain is Large ribosomal subunit protein bL17 from Chlorobium luteolum (strain DSM 273 / BCRC 81028 / 2530) (Pelodictyon luteolum).